A 237-amino-acid chain; its full sequence is Ribosomal RNA small subunit methyltransferase G (237 aa).

S-adenosyl-L-methionine-binding positions include Gly-78, Phe-83, Ala-129 to Glu-130, and Arg-146.

It belongs to the methyltransferase superfamily. RNA methyltransferase RsmG family.

It localises to the cytoplasm. Functionally, specifically methylates the N7 position of a guanine in 16S rRNA. This chain is Ribosomal RNA small subunit methyltransferase G, found in Mesoplasma florum (strain ATCC 33453 / NBRC 100688 / NCTC 11704 / L1) (Acholeplasma florum).